The chain runs to 106 residues: Cell division protein FtsB (106 aa).

At 1-3 the chain is on the cytoplasmic side; the sequence is MGK. A helical transmembrane segment spans residues 4–21; sequence LTLLLLVLLGWLQYSLWL. Residues 22–106 are Periplasmic-facing; it reads GKNGIHDYVR…SRPSTPNNTQ (85 aa). A coiled-coil region spans residues 29 to 70; it reads YVRVKNDVAMQERNNSKLKARNDQLSAEIDDLTGGQEAIEER.

This sequence belongs to the FtsB family. Part of a complex composed of FtsB, FtsL and FtsQ.

It is found in the cell inner membrane. Its function is as follows. Essential cell division protein. May link together the upstream cell division proteins, which are predominantly cytoplasmic, with the downstream cell division proteins, which are predominantly periplasmic. This is Cell division protein FtsB from Photorhabdus laumondii subsp. laumondii (strain DSM 15139 / CIP 105565 / TT01) (Photorhabdus luminescens subsp. laumondii).